We begin with the raw amino-acid sequence, 194 residues long: Peptidyl-tRNA hydrolase (194 aa).

Tyr-17 contacts tRNA. Catalysis depends on His-22, which acts as the Proton acceptor. Residues Tyr-68, Asn-70, and Asn-116 each contribute to the tRNA site.

The protein belongs to the PTH family. Monomer.

The protein localises to the cytoplasm. The enzyme catalyses an N-acyl-L-alpha-aminoacyl-tRNA + H2O = an N-acyl-L-amino acid + a tRNA + H(+). Functionally, hydrolyzes ribosome-free peptidyl-tRNAs (with 1 or more amino acids incorporated), which drop off the ribosome during protein synthesis, or as a result of ribosome stalling. Its function is as follows. Catalyzes the release of premature peptidyl moieties from peptidyl-tRNA molecules trapped in stalled 50S ribosomal subunits, and thus maintains levels of free tRNAs and 50S ribosomes. The sequence is that of Peptidyl-tRNA hydrolase from Pseudoalteromonas translucida (strain TAC 125).